A 375-amino-acid chain; its full sequence is 23S rRNA (uracil(747)-C(5))-methyltransferase RlmC (375 aa).

The [4Fe-4S] cluster site is built by Cys3, Cys11, Cys14, and Cys87. Residues Gln212, Phe241, Glu262, and Asn307 each coordinate S-adenosyl-L-methionine. Cys334 functions as the Nucleophile in the catalytic mechanism.

The protein belongs to the class I-like SAM-binding methyltransferase superfamily. RNA M5U methyltransferase family. RlmC subfamily.

The catalysed reaction is uridine(747) in 23S rRNA + S-adenosyl-L-methionine = 5-methyluridine(747) in 23S rRNA + S-adenosyl-L-homocysteine + H(+). Functionally, catalyzes the formation of 5-methyl-uridine at position 747 (m5U747) in 23S rRNA. This Yersinia enterocolitica serotype O:8 / biotype 1B (strain NCTC 13174 / 8081) protein is 23S rRNA (uracil(747)-C(5))-methyltransferase RlmC.